Consider the following 373-residue polypeptide: Alginate lyase (373 aa).

Residues 1–25 (MRLPMQKLLIPTLLGLAMFAGSVNA) form the signal peptide. Substrate-binding positions include 66–67 (SK), 139–140 (HT), and Tyr-257.

The protein belongs to the polysaccharide lyase 5 family.

The protein localises to the periplasm. It catalyses the reaction Eliminative cleavage of alginate to give oligosaccharides with 4-deoxy-alpha-L-erythro-hex-4-enuronosyl groups at their non-reducing ends and beta-D-mannuronate at their reducing end.. In terms of biological role, catalyzes the depolymerization of alginate by cleaving the beta-1,4 glycosidic bond between two adjacent sugar residues via a beta-elimination mechanism. May serve to degrade mislocalized alginate that is trapped in the periplasmic space. The protein is Alginate lyase of Pseudomonas fluorescens.